The primary structure comprises 554 residues: 2-succinyl-5-enolpyruvyl-6-hydroxy-3-cyclohexene-1-carboxylate synthase (554 aa).

This sequence belongs to the TPP enzyme family. MenD subfamily. As to quaternary structure, homodimer. The cofactor is Mg(2+). Mn(2+) serves as cofactor. Requires thiamine diphosphate as cofactor.

It catalyses the reaction isochorismate + 2-oxoglutarate + H(+) = 5-enolpyruvoyl-6-hydroxy-2-succinyl-cyclohex-3-ene-1-carboxylate + CO2. It participates in quinol/quinone metabolism; 1,4-dihydroxy-2-naphthoate biosynthesis; 1,4-dihydroxy-2-naphthoate from chorismate: step 2/7. It functions in the pathway quinol/quinone metabolism; menaquinone biosynthesis. In terms of biological role, catalyzes the thiamine diphosphate-dependent decarboxylation of 2-oxoglutarate and the subsequent addition of the resulting succinic semialdehyde-thiamine pyrophosphate anion to isochorismate to yield 2-succinyl-5-enolpyruvyl-6-hydroxy-3-cyclohexene-1-carboxylate (SEPHCHC). The polypeptide is 2-succinyl-5-enolpyruvyl-6-hydroxy-3-cyclohexene-1-carboxylate synthase (Lactococcus lactis subsp. cremoris (strain SK11)).